The following is a 209-amino-acid chain: MKKIIRVGIGGPVGSGKTAIIEVITPRLMQRGIKPLIITNDIVTTEDAKQVKRTLKGILDEEKIVGVETGACPHTAVREDPSMNIAAVEELEARFPDSDVIMIESGGDNLTLTFSPALADFYIYVIDVAEGEKIPRKNGPGLVQADILVINKTDLAPYVGADLSVMESDTKVVRGDRPYVMTNCKTGEGVEELVDMIMRDFLFTHSEIK.

Position 11 to 18 (11 to 18 (GPVGSGKT)) interacts with GTP.

Belongs to the SIMIBI class G3E GTPase family. UreG subfamily. In terms of assembly, homodimer. UreD, UreF and UreG form a complex that acts as a GTP-hydrolysis-dependent molecular chaperone, activating the urease apoprotein by helping to assemble the nickel containing metallocenter of UreC. The UreE protein probably delivers the nickel.

It localises to the cytoplasm. Its function is as follows. Facilitates the functional incorporation of the urease nickel metallocenter. This process requires GTP hydrolysis, probably effectuated by UreG. The chain is Urease accessory protein UreG from Edwardsiella ictaluri (strain 93-146).